A 155-amino-acid chain; its full sequence is uncharacterized protein (155 aa).

The N-terminal stretch at M1–A23 is a signal peptide. A disulfide bridge links C86 with C91.

Belongs to the ivy family.

The protein localises to the periplasm. This is an uncharacterized protein from Pseudomonas aeruginosa (strain ATCC 15692 / DSM 22644 / CIP 104116 / JCM 14847 / LMG 12228 / 1C / PRS 101 / PAO1).